A 663-amino-acid polypeptide reads, in one-letter code: DNA ligase (663 aa).

NAD(+) contacts are provided by residues 31–35, 80–81, and glutamate 110; these read DFEFD and SL. Lysine 112 serves as the catalytic N6-AMP-lysine intermediate. Residues arginine 133, glutamate 170, lysine 285, and lysine 309 each coordinate NAD(+). The Zn(2+) site is built by cysteine 404, cysteine 407, cysteine 422, and cysteine 428. The 79-residue stretch at 585–663 folds into the BRCT domain; that stretch reads FIDNKLAGKT…SEDEFLKMIE (79 aa).

It belongs to the NAD-dependent DNA ligase family. LigA subfamily. It depends on Mg(2+) as a cofactor. Mn(2+) is required as a cofactor.

The catalysed reaction is NAD(+) + (deoxyribonucleotide)n-3'-hydroxyl + 5'-phospho-(deoxyribonucleotide)m = (deoxyribonucleotide)n+m + AMP + beta-nicotinamide D-nucleotide.. In terms of biological role, DNA ligase that catalyzes the formation of phosphodiester linkages between 5'-phosphoryl and 3'-hydroxyl groups in double-stranded DNA using NAD as a coenzyme and as the energy source for the reaction. It is essential for DNA replication and repair of damaged DNA. The sequence is that of DNA ligase from Azobacteroides pseudotrichonymphae genomovar. CFP2.